Here is a 365-residue protein sequence, read N- to C-terminus: Probable 7-methylxanthine methyltransferase PCS2 (365 aa).

An S-adenosyl-L-homocysteine-binding site is contributed by tyrosine 19. Threonine 26 contacts theobromine. Cysteine 62, aspartate 99, leucine 100, serine 134, and phenylalanine 135 together coordinate S-adenosyl-L-homocysteine. The theobromine site is built by tyrosine 152, histidine 155, and tryptophan 156. Asparagine 173 is a binding site for Mg(2+). Arginine 221 provides a ligand contact to theobromine. Mg(2+) is bound by residues aspartate 259, phenylalanine 261, and asparagine 262.

This sequence belongs to the methyltransferase superfamily. Type-7 methyltransferase family. Mg(2+) is required as a cofactor.

It carries out the reaction 7-methylxanthine + S-adenosyl-L-methionine = theobromine + S-adenosyl-L-homocysteine + H(+). In terms of biological role, no detectable N-methyltransferase activity. This is Probable 7-methylxanthine methyltransferase PCS2 from Camellia ptilophylla (Cocoa tea).